The primary structure comprises 216 residues: GTP-binding nuclear protein Ran, testis-specific isoform (216 aa).

Residue Ala2 is modified to N-acetylalanine. The Small GTPase Ran-type domain maps to 7–171; it reads PQVQFKVVLV…FWLARKLIGD (165 aa). 17-24 contributes to the GTP binding site; the sequence is GDGGTGKT. Thr24 bears the Phosphothreonine mark. Residues 37–45 are switch-I; that stretch reads KEYVATLGV. Lys60 carries the N6-acetyllysine modification. 65-69 is a GTP binding site; it reads DTAGQ. Positions 68 to 84 are switch-II; the sequence is GQEKFGGLRDGYYIQAQ. At Lys71 the chain carries N6-acetyllysine; alternate. Lys71 is covalently cross-linked (Glycyl lysine isopeptide (Lys-Gly) (interchain with G-Cter in SUMO2); alternate). Residue Lys71 forms a Glycyl lysine isopeptide (Lys-Gly) (interchain with G-Cter in ubiquitin); alternate linkage. Position 99 is an N6-acetyllysine (Lys99). 122–125 provides a ligand contact to GTP; the sequence is NKVD. Lys134 bears the N6-acetyllysine mark. At Lys159 the chain carries N6-acetyllysine; alternate. Lys159 is subject to N6-succinyllysine; alternate.

Belongs to the small GTPase superfamily. Ran family. As to expression, testis specific.

The protein localises to the nucleus. It carries out the reaction GTP + H2O = GDP + phosphate + H(+). Functionally, GTP-binding protein involved in nucleocytoplasmic transport. Required for the import of protein into the nucleus and also for RNA export. Involved in chromatin condensation and control of cell cycle. The polypeptide is GTP-binding nuclear protein Ran, testis-specific isoform (Rasl2-9) (Mus musculus (Mouse)).